A 99-amino-acid polypeptide reads, in one-letter code: RNA-binding protein HI_1333 (99 aa).

The CRM domain maps to 2 to 98; it reads TTLSTKQKQF…SEEAKIQLPR (97 aa).

This chain is RNA-binding protein HI_1333, found in Haemophilus influenzae (strain ATCC 51907 / DSM 11121 / KW20 / Rd).